Consider the following 144-residue polypeptide: 3-hydroxyacyl-[acyl-carrier-protein] dehydratase FabZ (144 aa).

Residue His48 is part of the active site.

The protein belongs to the thioester dehydratase family. FabZ subfamily.

The protein localises to the cytoplasm. It catalyses the reaction a (3R)-hydroxyacyl-[ACP] = a (2E)-enoyl-[ACP] + H2O. Involved in unsaturated fatty acids biosynthesis. Catalyzes the dehydration of short chain beta-hydroxyacyl-ACPs and long chain saturated and unsaturated beta-hydroxyacyl-ACPs. The sequence is that of 3-hydroxyacyl-[acyl-carrier-protein] dehydratase FabZ from Bacillus pumilus (strain SAFR-032).